Reading from the N-terminus, the 235-residue chain is Large ribosomal subunit protein uL1 (235 aa).

The protein belongs to the universal ribosomal protein uL1 family. As to quaternary structure, part of the 50S ribosomal subunit.

In terms of biological role, binds directly to 23S rRNA. The L1 stalk is quite mobile in the ribosome, and is involved in E site tRNA release. Functionally, protein L1 is also a translational repressor protein, it controls the translation of the L11 operon by binding to its mRNA. This chain is Large ribosomal subunit protein uL1, found in Citrobacter koseri (strain ATCC BAA-895 / CDC 4225-83 / SGSC4696).